A 331-amino-acid chain; its full sequence is Ornithine carbamoyltransferase (331 aa).

Carbamoyl phosphate is bound by residues 55-58 (STRT), Gln82, Arg106, and 133-136 (HPTQ). Residues Asn166, Asp230, and 234–235 (SM) contribute to the L-ornithine site. Carbamoyl phosphate contacts are provided by residues 272 to 273 (CL) and Arg317.

Belongs to the aspartate/ornithine carbamoyltransferase superfamily. OTCase family.

Its subcellular location is the cytoplasm. The catalysed reaction is carbamoyl phosphate + L-ornithine = L-citrulline + phosphate + H(+). The protein operates within amino-acid biosynthesis; L-arginine biosynthesis; L-arginine from L-ornithine and carbamoyl phosphate: step 1/3. Its function is as follows. Reversibly catalyzes the transfer of the carbamoyl group from carbamoyl phosphate (CP) to the N(epsilon) atom of ornithine (ORN) to produce L-citrulline. This is Ornithine carbamoyltransferase (argF) from Neisseria gonorrhoeae.